The chain runs to 360 residues: Phosphoserine aminotransferase (360 aa).

R42 contributes to the L-glutamate binding site. Pyridoxal 5'-phosphate contacts are provided by residues 76–77 (AS), W102, T152, D172, and Q195. The residue at position 196 (K196) is an N6-(pyridoxal phosphate)lysine. Position 237 to 238 (237 to 238 (NT)) interacts with pyridoxal 5'-phosphate.

The protein belongs to the class-V pyridoxal-phosphate-dependent aminotransferase family. SerC subfamily. In terms of assembly, homodimer. Pyridoxal 5'-phosphate is required as a cofactor.

The protein resides in the cytoplasm. It catalyses the reaction O-phospho-L-serine + 2-oxoglutarate = 3-phosphooxypyruvate + L-glutamate. The catalysed reaction is 4-(phosphooxy)-L-threonine + 2-oxoglutarate = (R)-3-hydroxy-2-oxo-4-phosphooxybutanoate + L-glutamate. Its pathway is amino-acid biosynthesis; L-serine biosynthesis; L-serine from 3-phospho-D-glycerate: step 2/3. In terms of biological role, catalyzes the reversible conversion of 3-phosphohydroxypyruvate to phosphoserine and of 3-hydroxy-2-oxo-4-phosphonooxybutanoate to phosphohydroxythreonine. This chain is Phosphoserine aminotransferase, found in Bacillus cereus (strain ATCC 14579 / DSM 31 / CCUG 7414 / JCM 2152 / NBRC 15305 / NCIMB 9373 / NCTC 2599 / NRRL B-3711).